The primary structure comprises 32 residues: Hyaluronidase-Pk1a (32 aa).

The N-linked (GlcNAc...) asparagine glycan is linked to asparagine 23.

It belongs to the glycosyl hydrolase 56 family. As to expression, expressed by the venom gland.

It localises to the secreted. The enzyme catalyses Random hydrolysis of (1-&gt;4)-linkages between N-acetyl-beta-D-glucosamine and D-glucuronate residues in hyaluronate.. In terms of biological role, hydrolyzes high molecular weight hyaluronic acid to produce small oligosaccharides. This chain is Hyaluronidase-Pk1a, found in Phoneutria keyserlingi (Brazilian wandering spider).